The following is a 967-amino-acid chain: MPFTLGQRWISDTESELGLGTVVAVNTRMITLLFPASGENRLYSRSDAPITRVMFNPGDTVTSHEGWQLKIDDVREEKGLLVYCGQRLDDETPAELREVFLDSKLTFNKPQDRLFAGQIDRMDRFALRYRARKHQNEQALQQWGGLRGMRASLIPHQLHIAYEVGQRHAPRVLLADEVGLGKTIEAGMIIHQQLLAGRASRVLIVVPETLQHQWLVEMLRRFNLLFSLFDDERYAEAKLDSSNPFETEQLVICSLGFVQRSAQRFAQLVNTDWDLLVVDEAHHLVWSEESPSPEYQAIEALARATPAVLLLTATPEQLGQQSHFARLRLLDPNRFHDYQEFVAEQQQYRPVADAVTLLLAGEKAQAAELNVLSDLLGEQDIEPLLKSINSDSDDNQKARQELITMLMDRHGTSRVLFRNTRQGVKGFPQRVLHQIRLPLPAQYQTAIKVSGIMNANKPLETRARDMLYPEQIYQQLEGDDATWWNFDPRVEWLLNYLTTNRDEKVLVICAQAATALQLEQVLRTREAIRAAVFHEGLSILERDRAAAYFASEEEGAQVLICSEIGSEGRNFQFASHLVMFDLPFNPDLLEQRIGRLDRIGQAKEIQVLVPYLENTAQALLVRWYHEGLDAFEHTCPTGRTIYDAHHAQLIERLTTVGEQQGLDEFIHTCRQQHDSLKQQLEQGRDRLLEMHSNGGEQAQLLAQAIAEQDNDVNLVTFALNLFDIVGINQEDRSDNLIILTPSDHMLVPDFPGLPQDGCTITFDRDQALSREDAQFISWEHPLIRNGLDLVLSGDTGSCAVSLLKNKALPVGTLLAELVYVVEAQAPKHLQLTRFLPPTPVRLLMDRKGTNLAAQVEFESFNRQLNAVNRHTSSKLVNAVQSDVHAMLQQAEALVETQARQLITEAQQQADLQLRRELERLEALKAVNPNIREDELTALENQREQVLSNLHEANWRLDAIRLVVVTHQ.

The region spanning 163–333 (EVGQRHAPRV…FARLRLLDPN (171 aa)) is the Helicase ATP-binding domain. An ATP-binding site is contributed by 176–183 (DEVGLGKT). The DEAH box signature appears at 279–282 (DEAH). The 189-residue stretch at 489–677 (RVEWLLNYLT…TCRQQHDSLK (189 aa)) folds into the Helicase C-terminal domain.

This sequence belongs to the SNF2/RAD54 helicase family. RapA subfamily. Interacts with the RNAP. Has a higher affinity for the core RNAP than for the holoenzyme. Its ATPase activity is stimulated by binding to RNAP.

Transcription regulator that activates transcription by stimulating RNA polymerase (RNAP) recycling in case of stress conditions such as supercoiled DNA or high salt concentrations. Probably acts by releasing the RNAP, when it is trapped or immobilized on tightly supercoiled DNA. Does not activate transcription on linear DNA. Probably not involved in DNA repair. The chain is RNA polymerase-associated protein RapA from Pectobacterium atrosepticum (strain SCRI 1043 / ATCC BAA-672) (Erwinia carotovora subsp. atroseptica).